Here is a 551-residue protein sequence, read N- to C-terminus: uncharacterized protein (551 aa).

Disordered regions lie at residues 66 to 111 (GNNK…STNL), 130 to 165 (PEATGLMKEDITPVVNTSKQSSTGTQEESSKPEKSN), 180 to 229 (AFNP…LSNL), and 277 to 303 (AFTSPRLPSPPQSTRPSSTRFPSVPLS). S74 carries the phosphoserine modification. Composition is skewed to polar residues over residues 92–111 (GFSNRESMSENCFSKSSTNL) and 143–156 (VVNTSKQSSTGTQE). Low complexity predominate over residues 182-193 (NPSSVLPSNSSS). Positions 204–226 (KETYQPNTFRRSPLKNDTGSVEL) are enriched in polar residues. Low complexity predominate over residues 290–299 (TRPSSTRFPS).

This is an uncharacterized protein from Schizosaccharomyces pombe (strain 972 / ATCC 24843) (Fission yeast).